The chain runs to 894 residues: MIDAWAIKRALCIFILINCVLKLGRSRKITWKPKKGVYIPLDDANGCKGEWKRKGVFFNIQSGKKGKRLKGRKGLRRGLVTRGTPQFRRDKFIPLFLLQDCEHRSLNGKQYNLRGRRCSSPLDVNPRGWDILPPEQPNEETIGERIGERIGEAEQLEDEGLDGGPPPGMEAKKSSSSSSSNNVHSNCSDAGKAPVCSQENIRNFCILAHIDSGKSTLADRFLELTKTIKKKKMQDQFLDMMSLEREKGITIKLKAVRMNYKNYIFNLIDTPGHFDFYHEVKRSLSVCEGAILLIDGTKGIQSQTLNIFMELQKHNLKIIPVINKIDLNICRLEKIENDLLNKFHFMKKDILHISAKYSHGVESLFQRIVSEIPSPAIKSNSFFRAIVFDSFYDQYKGVILIIKVLNGVLTKKTEVFFIQSEKTYIIQEVGYLTPEMKPTESIRQGDIAYVSSNIRKCDEVQMSETIISRDIVHLNAQRRLVVDSDLLRRNPSGEEHINVKRCNIDSSLGGVAPRMERIEREVNLEEIAASKVDVSYPVVFCNIYSVNDKQANELQAALNKLKLNDASFSFKPDVCETLGKGFKCGFNGLLHLNIIQERIKREYDVETIVTAPSVNYLIRVKEKCIDKQLKERLIDASFDIANINVEGGDHDDCNDNGGSNSDDRSDRSGKNPPDGLYYMTSNVNDIPQKNYIHGIYEPYVRTSIMTPEEYQKYIMAECFQRRGIFIKKESMDSHIIFYFDMPLSEILINFLDQIKSCTKGYGSMSYENFITYRESDLHKINIYVNNRSIDSLSFLAHKLNYQEKGKRIVLKLKEMIKPHQFLVVIQAGIGTRIFASERINPLRKNVTAKCYGGDITRRRKLLEKQSAGKKKMFSIGKVKLPPNMFTKLFDLKAQ.

Positions 157–189 (EDEGLDGGPPPGMEAKKSSSSSSSNNVHSNCSD) are disordered. Residues 174–188 (SSSSSSSNNVHSNCS) show a composition bias toward low complexity. Residues 199–376 (ENIRNFCILA…RIVSEIPSPA (178 aa)) enclose the tr-type G domain. GTP contacts are provided by residues 208-215 (AHIDSGKS), 269-273 (DTPGH), and 323-326 (NKID). The disordered stretch occupies residues 649–674 (DHDDCNDNGGSNSDDRSDRSGKNPPD).

The protein belongs to the TRAFAC class translation factor GTPase superfamily. Classic translation factor GTPase family. LepA subfamily.

The protein localises to the mitochondrion inner membrane. The catalysed reaction is GTP + H2O = GDP + phosphate + H(+). In terms of biological role, promotes mitochondrial protein synthesis. May act as a fidelity factor of the translation reaction, by catalyzing a one-codon backward translocation of tRNAs on improperly translocated ribosomes. Binds to mitochondrial ribosomes in a GTP-dependent manner. The chain is Translation factor GUF1 homolog, mitochondrial from Plasmodium knowlesi (strain H).